The chain runs to 725 residues: mRNA decay activator protein ZFP36L3 (725 aa).

The segment covering 1–25 has biased composition (low complexity); that stretch reads MANNNLNRPLNTNVADSSNSSSTPG. The tract at residues 1–119 is disordered; that stretch reads MANNNLNRPL…KVSGSSSLAT (119 aa). Composition is skewed to polar residues over residues 42–72 and 100–119; these read APSS…QSGA and HSLQ…SLAT. 2 consecutive C3H1-type zinc fingers follow at residues 122–150 and 160–188; these read RYKT…HGYR and KYKT…HNQP. The necessary for cytoplasmic localization stretch occupies residues 193–711; it reads VLSESTLEEP…ESEFDNTNSS (519 aa). Positions 276-310 are disordered; sequence STTAHDADKDPDKDADKDPSNNSANDALAFPQEPG. The segment covering 280 to 294 has biased composition (basic and acidic residues); it reads HDADKDPDKDADKDP. A run of 4 helical transmembrane segments spans residues 380–400, 420–440, 441–461, and 468–488; these read LAPA…AMAL, AALA…GAAM, APGA…MATG, and AAMA…GAAV. The interval 686 to 709 is disordered; sequence DEDDFLRRSSSSSSLNESEFDNTN. Residues 693–702 are compositionally biased toward low complexity; it reads RSSSSSSLNE.

In terms of tissue distribution, expressed in placenta and extraembryonic tissues (at protein level). Not detected in embryos and fetus.

Its subcellular location is the cytoplasm. The protein resides in the membrane. Its function is as follows. Placenta-specific zinc-finger RNA-binding protein that destabilizes cytoplasmic AU-rich element (ARE)-containing mRNA transcripts by promoting their poly(A) tail removal or deadenylation, and hence provide a mechanism for attenuating protein synthesis. Binds to the 3'-UTR ARE of placental target mRNAs, such as TNF, HBEGF and LIPG. Involved in placental expression of many genes important for normal placental physiology. The polypeptide is mRNA decay activator protein ZFP36L3 (Mus musculus (Mouse)).